The chain runs to 251 residues: Imidazole glycerol phosphate synthase subunit HisF (251 aa).

Active-site residues include Asp11 and Asp130.

The protein belongs to the HisA/HisF family. Heterodimer of HisH and HisF.

The protein localises to the cytoplasm. It catalyses the reaction 5-[(5-phospho-1-deoxy-D-ribulos-1-ylimino)methylamino]-1-(5-phospho-beta-D-ribosyl)imidazole-4-carboxamide + L-glutamine = D-erythro-1-(imidazol-4-yl)glycerol 3-phosphate + 5-amino-1-(5-phospho-beta-D-ribosyl)imidazole-4-carboxamide + L-glutamate + H(+). It functions in the pathway amino-acid biosynthesis; L-histidine biosynthesis; L-histidine from 5-phospho-alpha-D-ribose 1-diphosphate: step 5/9. Its function is as follows. IGPS catalyzes the conversion of PRFAR and glutamine to IGP, AICAR and glutamate. The HisF subunit catalyzes the cyclization activity that produces IGP and AICAR from PRFAR using the ammonia provided by the HisH subunit. The chain is Imidazole glycerol phosphate synthase subunit HisF from Bacteroides thetaiotaomicron (strain ATCC 29148 / DSM 2079 / JCM 5827 / CCUG 10774 / NCTC 10582 / VPI-5482 / E50).